The chain runs to 126 residues: Large ribosomal subunit protein uL22 (126 aa).

This sequence belongs to the universal ribosomal protein uL22 family. Part of the 50S ribosomal subunit.

Functionally, this protein binds specifically to 23S rRNA; its binding is stimulated by other ribosomal proteins, e.g. L4, L17, and L20. It is important during the early stages of 50S assembly. It makes multiple contacts with different domains of the 23S rRNA in the assembled 50S subunit and ribosome. In terms of biological role, the globular domain of the protein is located near the polypeptide exit tunnel on the outside of the subunit, while an extended beta-hairpin is found that lines the wall of the exit tunnel in the center of the 70S ribosome. This Zymomonas mobilis subsp. mobilis (strain ATCC 31821 / ZM4 / CP4) protein is Large ribosomal subunit protein uL22.